The primary structure comprises 544 residues: Chaperonin GroEL (544 aa).

Residues 29 to 32 (TLGP), 86 to 90 (DGTTT), G413, 476 to 478 (NAA), and D492 each bind ATP.

Belongs to the chaperonin (HSP60) family. Forms a cylinder of 14 subunits composed of two heptameric rings stacked back-to-back. Interacts with the co-chaperonin GroES.

Its subcellular location is the cytoplasm. It carries out the reaction ATP + H2O + a folded polypeptide = ADP + phosphate + an unfolded polypeptide.. Its function is as follows. Together with its co-chaperonin GroES, plays an essential role in assisting protein folding. The GroEL-GroES system forms a nano-cage that allows encapsulation of the non-native substrate proteins and provides a physical environment optimized to promote and accelerate protein folding. This Bacillus thuringiensis (strain Al Hakam) protein is Chaperonin GroEL.